The chain runs to 218 residues: Ribose-5-phosphate isomerase A (218 aa).

Residues 28 to 31, 81 to 84, and 94 to 97 each bind substrate; these read TGST, DGAD, and KGGG. Glutamate 103 (proton acceptor) is an active-site residue. Lysine 121 is a substrate binding site.

The protein belongs to the ribose 5-phosphate isomerase family. Homodimer.

It carries out the reaction aldehydo-D-ribose 5-phosphate = D-ribulose 5-phosphate. It participates in carbohydrate degradation; pentose phosphate pathway; D-ribose 5-phosphate from D-ribulose 5-phosphate (non-oxidative stage): step 1/1. Its function is as follows. Catalyzes the reversible conversion of ribose-5-phosphate to ribulose 5-phosphate. This is Ribose-5-phosphate isomerase A from Vibrio campbellii (strain ATCC BAA-1116).